A 234-amino-acid chain; its full sequence is Ribosomal RNA small subunit methyltransferase G (234 aa).

Residues G85, F90, and R155 each contribute to the S-adenosyl-L-methionine site.

The protein belongs to the methyltransferase superfamily. RNA methyltransferase RsmG family.

It localises to the cytoplasm. The enzyme catalyses guanosine(527) in 16S rRNA + S-adenosyl-L-methionine = N(7)-methylguanosine(527) in 16S rRNA + S-adenosyl-L-homocysteine. In terms of biological role, specifically methylates the N7 position of guanine in position 527 of 16S rRNA. This chain is Ribosomal RNA small subunit methyltransferase G, found in Rhodopseudomonas palustris (strain BisB18).